A 242-amino-acid polypeptide reads, in one-letter code: UPF0246 protein SPD_1378 (242 aa).

The protein belongs to the UPF0246 family.

This Streptococcus pneumoniae serotype 2 (strain D39 / NCTC 7466) protein is UPF0246 protein SPD_1378.